The primary structure comprises 445 residues: Anaerobilin synthase (445 aa).

The Radical SAM core domain maps to 52-287 (TASPRKRLVY…LQGCDFMDDA (236 aa)). An S-adenosyl-L-methionine-binding site is contributed by Y61. The [4Fe-4S] cluster site is built by C67 and C71. F73 lines the S-adenosyl-L-methionine pocket. C74 is a binding site for [4Fe-4S] cluster. S-adenosyl-L-methionine is bound by residues G118, 119–120 (GT), E151, Q178, R190, and D215.

This sequence belongs to the anaerobic coproporphyrinogen-III oxidase family. ChuW/HutW subfamily. The cofactor is [4Fe-4S] cluster.

The catalysed reaction is 2 reduced [flavodoxin] + heme b + 2 S-adenosyl-L-methionine = anaerobilin + 2 oxidized [flavodoxin] + Fe(2+) + 5'-deoxyadenosine + L-methionine + S-adenosyl-L-homocysteine. Inhibited by exposure to molecular oxygen. Functionally, involved in heme degradation and iron utilization under anaerobic conditions. Catalyzes a radical-mediated mechanism facilitating iron liberation and the production of the tetrapyrrole product anaerobilin. Can use heme, mesoheme and deuteroheme as substrates. The chain is Anaerobilin synthase from Escherichia coli O157:H7.